A 508-amino-acid polypeptide reads, in one-letter code: Light-independent protochlorophyllide reductase subunit B (508 aa).

D36 is a [4Fe-4S] cluster binding site. D282 functions as the Proton donor in the catalytic mechanism. 417–418 provides a ligand contact to substrate; it reads GL.

Belongs to the ChlB/BchB/BchZ family. In terms of assembly, protochlorophyllide reductase is composed of three subunits; BchL, BchN and BchB. Forms a heterotetramer of two BchB and two BchN subunits. The cofactor is [4Fe-4S] cluster.

The enzyme catalyses chlorophyllide a + oxidized 2[4Fe-4S]-[ferredoxin] + 2 ADP + 2 phosphate = protochlorophyllide a + reduced 2[4Fe-4S]-[ferredoxin] + 2 ATP + 2 H2O. Its pathway is porphyrin-containing compound metabolism; bacteriochlorophyll biosynthesis (light-independent). Functionally, component of the dark-operative protochlorophyllide reductase (DPOR) that uses Mg-ATP and reduced ferredoxin to reduce ring D of protochlorophyllide (Pchlide) to form chlorophyllide a (Chlide). This reaction is light-independent. The NB-protein (BchN-BchB) is the catalytic component of the complex. The protein is Light-independent protochlorophyllide reductase subunit B of Methylocella silvestris (strain DSM 15510 / CIP 108128 / LMG 27833 / NCIMB 13906 / BL2).